The sequence spans 199 residues: Probable nicotinate-nucleotide adenylyltransferase (199 aa).

This sequence belongs to the NadD family.

The catalysed reaction is nicotinate beta-D-ribonucleotide + ATP + H(+) = deamido-NAD(+) + diphosphate. Its pathway is cofactor biosynthesis; NAD(+) biosynthesis; deamido-NAD(+) from nicotinate D-ribonucleotide: step 1/1. Functionally, catalyzes the reversible adenylation of nicotinate mononucleotide (NaMN) to nicotinic acid adenine dinucleotide (NaAD). The sequence is that of Probable nicotinate-nucleotide adenylyltransferase from Chloroherpeton thalassium (strain ATCC 35110 / GB-78).